Here is a 140-residue protein sequence, read N- to C-terminus: uncharacterized protein (140 aa).

It belongs to the MG439/MG440 family.

This is an uncharacterized protein from Mycoplasma pneumoniae (strain ATCC 29342 / M129 / Subtype 1) (Mycoplasmoides pneumoniae).